The sequence spans 266 residues: Glucosamine-6-phosphate deaminase (266 aa).

Asp-72 functions as the Proton acceptor; for enolization step in the catalytic mechanism. Catalysis depends on Asp-141, which acts as the For ring-opening step. His-143 functions as the Proton acceptor; for ring-opening step in the catalytic mechanism. The active-site For ring-opening step is the Glu-148.

It belongs to the glucosamine/galactosamine-6-phosphate isomerase family. NagB subfamily. As to quaternary structure, homohexamer.

The enzyme catalyses alpha-D-glucosamine 6-phosphate + H2O = beta-D-fructose 6-phosphate + NH4(+). The protein operates within amino-sugar metabolism; N-acetylneuraminate degradation; D-fructose 6-phosphate from N-acetylneuraminate: step 5/5. Allosterically activated by N-acetylglucosamine 6-phosphate (GlcNAc6P). Catalyzes the reversible isomerization-deamination of glucosamine 6-phosphate (GlcN6P) to form fructose 6-phosphate (Fru6P) and ammonium ion. The protein is Glucosamine-6-phosphate deaminase of Aliivibrio salmonicida (strain LFI1238) (Vibrio salmonicida (strain LFI1238)).